A 37-amino-acid polypeptide reads, in one-letter code: Mastoparan-VT (37 aa).

Residues 1–22 (EALADPIADPVAGPNPEADPEA) constitute a propeptide that is removed on maturation. AXPX repeat units lie at residues 4–7 (ADPI), 8–11 (ADPV), 12–15 (AGPN), and 18–21 (ADPE). L36 bears the Leucine amide mark.

This sequence belongs to the MCD family. Mastoparan subfamily. As to expression, expressed by the venom gland.

It is found in the secreted. Its subcellular location is the target cell membrane. Antimicrobial peptide with potent activity against both Gram-positive (S.aureus MIC=50 ug/ml, and B.subtilis MIC=25 ug/ml) and Gram-negative bacteria (P.aeruginosa MIC=25 ug/ml, E.coli MIC=3-50 ug/ml, K.pneumoniae MIC=25 ug/ml). Exhibits little hemolytic activity on human erythrocytes. The sequence is that of Mastoparan-VT from Vespa tropica (Greater banded hornet).